Reading from the N-terminus, the 276-residue chain is MNAIEALLFAVIQGVSELFPVSSLGHGVLIPDWLHWSINRTHPDFLPFMVMLHLGTAAALLIYFRRDWVDLIGGWLKAGGRASNPHARLMWLVIAGTLPAGLLGLLLEKQLRALFASTTAVLVFLALNGLLLLWGDKLKKKTASHELSELSFAGAIKIGAGQALALLPGFSRSGATLVAGLAHGLDYASSARFSFLLATPIITAAGLLEIPKLAHRGNGSAEWGLLLACGAVSGLCAYASTWFLMRYFKKTEIESLRPFGFYCLLVGVVGLLFKLV.

Helical transmembrane passes span 4-24 (IEAL…VSSL), 44-64 (DFLP…LIYF), 87-107 (ARLM…GLLL), 114-134 (LFAS…LLLW), 150-170 (LSFA…LPGF), 193-213 (FSFL…IPKL), 225-245 (LLLA…WFLM), and 256-276 (LRPF…FKLV).

It belongs to the UppP family.

It localises to the cell inner membrane. It carries out the reaction di-trans,octa-cis-undecaprenyl diphosphate + H2O = di-trans,octa-cis-undecaprenyl phosphate + phosphate + H(+). In terms of biological role, catalyzes the dephosphorylation of undecaprenyl diphosphate (UPP). Confers resistance to bacitracin. The protein is Undecaprenyl-diphosphatase 2 of Chromobacterium violaceum (strain ATCC 12472 / DSM 30191 / JCM 1249 / CCUG 213 / NBRC 12614 / NCIMB 9131 / NCTC 9757 / MK).